Here is a 152-residue protein sequence, read N- to C-terminus: Large ribosomal subunit protein bL9 (152 aa).

The protein belongs to the bacterial ribosomal protein bL9 family.

Binds to the 23S rRNA. The chain is Large ribosomal subunit protein bL9 from Gloeothece citriformis (strain PCC 7424) (Cyanothece sp. (strain PCC 7424)).